Here is a 590-residue protein sequence, read N- to C-terminus: MNNYFLRKENFFILFCFVFVSIFFVSNVTIIKCNNVENKIDNVGKKIENVGKKIGDMENKNDNVENKNDNVGNKNDNVKNASSDLYKYKLYGDIDEYAYYFLDIDIGKPSQRISLILDTGSSSLSFPCNGCKDCGIHMEKPYNLNYSKTSSILYCNKSNCPYGLKCVGNKCEYLQSYCEGSQIYGFYFSDIVTLPSYNNKNKISFEKLMGCHMHEESLFLHQQATGVLGFSLTKPNGVPTFVDLLFKHTPSLKPIYSICVSEHGGELIIGGYEPDYFLSNQKEKQKMDKSDNNSSNKGNVSIKLKNNDKNDDEENNSKDVIVSNNVEDIVWQAITRKYYYYIKIYGLDLYGTNIMDKKELDMLVDSGSTFTHIPENIYNQINYYLDILCIHDMTNIYEINKRLKLTNESLNKPLVYFEDFKTALKNIIQNENLCIKIVDGVQCWKSLENLPNLYITLSNNYKMIWKPSSYLYKKESFWCKGLEKQVNNKPILGLTFFKNKQVIFDLQQNQIAFIESKCPSNLTSSRPRTFNEYREKENIFLKVSYINLYCLWLLLALTILLSLILYVRKMFYMDYFPLSDQNKSPIQEST.

Residues 1-544 (MNNYFLRKEN…EKENIFLKVS (544 aa)) are Lumenal-facing. Positions 33 to 81 (CNNVENKIDNVGKKIENVGKKIGDMENKNDNVENKNDNVGNKNDNVKNA) form a coiled coil. The region spanning 100–514 (YFLDIDIGKP…DLQQNQIAFI (415 aa)) is the Peptidase A1 domain. The active site involves Asp118. Disulfide bonds link Cys128–Cys211, Cys131–Cys134, Cys155–Cys166, Cys160–Cys171, Cys259–Cys518, Cys389–Cys434, and Cys443–Cys479. A compositionally biased stretch (basic and acidic residues) spans 282-291 (KEKQKMDKSD). The disordered stretch occupies residues 282–316 (KEKQKMDKSDNNSSNKGNVSIKLKNNDKNDDEENN). A compositionally biased stretch (low complexity) spans 292–304 (NNSSNKGNVSIKL). Asp365 is an active-site residue. Residues 545–565 (YINLYCLWLLLALTILLSLIL) form a helical membrane-spanning segment. Topologically, residues 566–590 (YVRKMFYMDYFPLSDQNKSPIQEST) are cytoplasmic.

It belongs to the peptidase A1 family. In terms of assembly, component of a complex composed of SPC25 and PMV; the interaction is mediated via the transmembrane domains. The complex interacts with the SEC61 channel-forming translocon complex and is involved in the recognition and import of PEXEL motif-containing proteins into the ER for subsequent export. In terms of processing, it is not clear if the zymogen has a cleavable propeptide. In vitro, appears to be cleaved between Asn-80 and Ala-81. Cleavage of the putative propeptide is dispensable for catalytic activity.

The protein resides in the endoplasmic reticulum membrane. Inhibited by peptidomimetic inhibitor WEHI-842. Inhibited by Cu(2+) and Hg(2+). Functionally, during the asexual blood stage, plays an essential role in the export of several proteins into the host erythrocytes by cleaving the pentameric localization motif RxLxE/Q/D (termed Plasmodium export element (PEXEL)) located downstream of the N-terminal secretory signal sequence. Specifically, cleaves after the leucine residue in the RxLxE/Q/D (or RxLxxE) motif of exported proteins including RESA, EMP2, EMP3, KAHRP, RIF/Rifin and STEVOR. Also, by regulating protein export, plays an essential role in gametocyte development and thus, parasite transmission to the mosquito vector. This Plasmodium falciparum (isolate 3D7) protein is Plasmepsin V.